The primary structure comprises 273 residues: Formamidopyrimidine-DNA glycosylase (273 aa).

Catalysis depends on P2, which acts as the Schiff-base intermediate with DNA. The Proton donor role is filled by E3. K58 acts as the Proton donor; for beta-elimination activity in catalysis. Residues H91 and R110 each coordinate DNA. The segment at 238–272 (QVYGKTGQPCPRCASMIVKIKLGGRGTHLCPHCQK) adopts an FPG-type zinc-finger fold. R262 serves as the catalytic Proton donor; for delta-elimination activity.

It belongs to the FPG family. As to quaternary structure, monomer. Zn(2+) is required as a cofactor.

It catalyses the reaction Hydrolysis of DNA containing ring-opened 7-methylguanine residues, releasing 2,6-diamino-4-hydroxy-5-(N-methyl)formamidopyrimidine.. The enzyme catalyses 2'-deoxyribonucleotide-(2'-deoxyribose 5'-phosphate)-2'-deoxyribonucleotide-DNA = a 3'-end 2'-deoxyribonucleotide-(2,3-dehydro-2,3-deoxyribose 5'-phosphate)-DNA + a 5'-end 5'-phospho-2'-deoxyribonucleoside-DNA + H(+). Involved in base excision repair of DNA damaged by oxidation or by mutagenic agents. Acts as a DNA glycosylase that recognizes and removes damaged bases. Has a preference for oxidized purines, such as 7,8-dihydro-8-oxoguanine (8-oxoG). Has AP (apurinic/apyrimidinic) lyase activity and introduces nicks in the DNA strand. Cleaves the DNA backbone by beta-delta elimination to generate a single-strand break at the site of the removed base with both 3'- and 5'-phosphates. The polypeptide is Formamidopyrimidine-DNA glycosylase (Streptococcus thermophilus (strain ATCC BAA-250 / LMG 18311)).